Reading from the N-terminus, the 230-residue chain is E3 ubiquitin-protein ligase RNF114 (230 aa).

An RING-type zinc finger spans residues 31–70 (CPVCLEVYEKPVQVPCGHVFCSACLQECLKPKKPVCGVCR). The Zn(2+) site is built by cysteine 93 and cysteine 96. The C2HC RNF-type zinc finger occupies 93 to 112 (CHGCRKNFFLSKIRAHVATC). Lysine 104 is modified (N6-acetyllysine). Positions 108 and 112 each coordinate Zn(2+). Lysine 114 carries the post-translational modification N6-acetyllysine.

As to quaternary structure, interacts with XAF1, the interaction increases XAF1 stability and proapoptotic effects, and may regulate IFN signaling. Autoubiquitinated. Polyubiquitinated in the presence of E2 enzymes UBE2D1, UBE2D2 and UBE2D3, but only monoubiquitinated in the presence of UBE2E1.

The protein resides in the cytoplasm. Its subcellular location is the nucleus. The enzyme catalyses S-ubiquitinyl-[E2 ubiquitin-conjugating enzyme]-L-cysteine + [acceptor protein]-L-lysine = [E2 ubiquitin-conjugating enzyme]-L-cysteine + N(6)-ubiquitinyl-[acceptor protein]-L-lysine.. Its pathway is protein modification; protein ubiquitination. Functionally, E3 ubiquitin-protein ligase that promotes the ubiquitination of various substrates. In turn, participates in the regulation of many biological processes including cell cycle, apoptosis, osteoclastogenesis as well as innate or adaptive immunity. Acts as negative regulator of NF-kappa-B-dependent transcription by promoting the ubiquitination and stabilization of the NF-kappa-B inhibitor TNFAIP3. May promote the ubiquitination of TRAF6 as well. Also acts as a negative regulator of T-cell activation. Inhibits cellular dsRNA responses and interferon production by targeting MAVS component for proteasomal degradation. Ubiquitinates the CDK inhibitor CDKN1A leading to its degradationand probably also CDKN1B and CDKN1C. This activity stimulates cell cycle G1-to-S phase transition and suppresses cellular senescence. May play a role in spermatogenesis. The polypeptide is E3 ubiquitin-protein ligase RNF114 (RNF114) (Bos taurus (Bovine)).